We begin with the raw amino-acid sequence, 325 residues long: Elongation factor P--(R)-beta-lysine ligase (325 aa).

Ser-76–Glu-78 lines the substrate pocket. ATP contacts are provided by residues Arg-100–Glu-102 and Asn-109. A substrate-binding site is contributed by Tyr-118. Glu-244–Leu-245 is an ATP binding site. Glu-251 is a substrate binding site. Position 300 (Gly-300) interacts with ATP.

This sequence belongs to the class-II aminoacyl-tRNA synthetase family. EpmA subfamily. In terms of assembly, homodimer.

The catalysed reaction is D-beta-lysine + L-lysyl-[protein] + ATP = N(6)-((3R)-3,6-diaminohexanoyl)-L-lysyl-[protein] + AMP + diphosphate + H(+). With EpmB is involved in the beta-lysylation step of the post-translational modification of translation elongation factor P (EF-P). Catalyzes the ATP-dependent activation of (R)-beta-lysine produced by EpmB, forming a lysyl-adenylate, from which the beta-lysyl moiety is then transferred to the epsilon-amino group of a conserved specific lysine residue in EF-P. The polypeptide is Elongation factor P--(R)-beta-lysine ligase (Photorhabdus laumondii subsp. laumondii (strain DSM 15139 / CIP 105565 / TT01) (Photorhabdus luminescens subsp. laumondii)).